Reading from the N-terminus, the 25-residue chain is M-poneritoxin-Ng1a (25 aa).

In terms of tissue distribution, expressed by the venom gland.

The protein resides in the secreted. It is found in the target cell membrane. In terms of biological role, has a broad spectrum of activity against both Gram-positive and Gram-negative bacteria and S.cerevisiae. Has insecticidal and hemolytic activities. May act by disrupting the integrity of the bacterial cell membrane. This chain is M-poneritoxin-Ng1a, found in Neoponera goeldii (Ponerine ant).